Here is an 801-residue protein sequence, read N- to C-terminus: Mitochondrial intermediate peptidase (801 aa).

The N-terminal 41 residues, 1–41, are a transit peptide targeting the mitochondrion; that stretch reads MKDQLLVPLRRRPWTCQKCLQRLQLPRHQTRRSFETAASPF. Histidine 564 provides a ligand contact to Zn(2+). The active site involves glutamate 565. Positions 568 and 571 each coordinate Zn(2+).

The protein belongs to the peptidase M3 family. Zn(2+) is required as a cofactor.

It is found in the mitochondrion matrix. It catalyses the reaction Release of an N-terminal octapeptide as second stage of processing of some proteins imported into the mitochondrion.. In terms of biological role, cleaves proteins, imported into the mitochondrion, to their mature size. While most mitochondrial precursor proteins are processed to the mature form in one step by mitochondrial processing peptidase (MPP), the sequential cleavage by MIP of an octapeptide after initial processing by MPP is a required step for a subgroup of nuclear-encoded precursor proteins destined for the matrix or the inner membrane. The polypeptide is Mitochondrial intermediate peptidase (oct1) (Aspergillus fumigatus (strain ATCC MYA-4609 / CBS 101355 / FGSC A1100 / Af293) (Neosartorya fumigata)).